Consider the following 279-residue polypeptide: MGIKKFKPVTSASRYKSVLDFKEITETEPYKPLTLTLSYKAGRGDGGKISVRHKGGRVKRKYRIIDFKRRKTNVSAVVKTLEYDPNRSAFISLICYKDGEYAYILAPDGIKVGDTVQSGAGSEIKIGNAMPIGKIPPGTNVHNVELQIGRGGQIARTAGSFGTIAGRDGEYILLKLPSTEVRKVHENCYATIGICSNKDHNLVSIGKAGRSRWLGKRPTVRGVVMNPVDHPHGGGEGRTSGGRHPVSPWGQPTKGYKTRRSARPSDKFIVQKRKRNRNR.

The segment at valine 223–arginine 279 is disordered. Over residues valine 270 to arginine 279 the composition is skewed to basic residues.

This sequence belongs to the universal ribosomal protein uL2 family. Part of the 50S ribosomal subunit. Forms a bridge to the 30S subunit in the 70S ribosome.

One of the primary rRNA binding proteins. Required for association of the 30S and 50S subunits to form the 70S ribosome, for tRNA binding and peptide bond formation. It has been suggested to have peptidyltransferase activity; this is somewhat controversial. Makes several contacts with the 16S rRNA in the 70S ribosome. The chain is Large ribosomal subunit protein uL2 from Leptospira borgpetersenii serovar Hardjo-bovis (strain JB197).